Reading from the N-terminus, the 275-residue chain is 2,3,4,5-tetrahydropyridine-2,6-dicarboxylate N-succinyltransferase (275 aa).

Substrate-binding residues include Arg106 and Asp143.

The protein belongs to the transferase hexapeptide repeat family. In terms of assembly, homotrimer.

It localises to the cytoplasm. It catalyses the reaction (S)-2,3,4,5-tetrahydrodipicolinate + succinyl-CoA + H2O = (S)-2-succinylamino-6-oxoheptanedioate + CoA. It participates in amino-acid biosynthesis; L-lysine biosynthesis via DAP pathway; LL-2,6-diaminopimelate from (S)-tetrahydrodipicolinate (succinylase route): step 1/3. The polypeptide is 2,3,4,5-tetrahydropyridine-2,6-dicarboxylate N-succinyltransferase (Cupriavidus necator (strain ATCC 17699 / DSM 428 / KCTC 22496 / NCIMB 10442 / H16 / Stanier 337) (Ralstonia eutropha)).